Consider the following 692-residue polypeptide: NAD(P)H-quinone oxidoreductase subunit 5, chloroplastic (692 aa).

Transmembrane regions (helical) follow at residues 9–29 (WFVPLFPFLASILLGIGLFFF), 39–59 (LSSFISIMFLNIAMLLSFHFF), 89–109 (LDPLTSIMLVLVTTVAVMVMI), 120–140 (GYIKFFCYLSLFTASMLGLVL), 147–167 (VYIFWELVGMCSYLLIGFWFT), 184–204 (IGDFGLLLGILGFYWITGSFD), 219–239 (NQINLVFATLCALFLFLGPVA), 258–278 (TPISALIHAATMVAAGIFLVA), 289–309 (FVMSIISWTGAITALLGATIA), 327–347 (LGYMMLALGIGSYKAGLFHLI), 354–374 (ALLFLGSGSVIHSMEPIVGYH), 395–415 (AITFLFGTLSLCGIPPFACFW), 425–445 (WLHFPILGSIAFFTAGLTAFY), 503–523 (LFPLIILTIPTVFIGFIGILF), 555–575 (FLFNAIPSVSIAFFGILIAFY), 643–663 (WIIDGIINGIGIFSFFGGESL), and 671–691 (ISSYLFFIIFCMFLFFLYSYI).

Belongs to the complex I subunit 5 family. NDH is composed of at least 16 different subunits, 5 of which are encoded in the nucleus.

Its subcellular location is the plastid. The protein resides in the chloroplast thylakoid membrane. It catalyses the reaction a plastoquinone + NADH + (n+1) H(+)(in) = a plastoquinol + NAD(+) + n H(+)(out). The enzyme catalyses a plastoquinone + NADPH + (n+1) H(+)(in) = a plastoquinol + NADP(+) + n H(+)(out). Its function is as follows. NDH shuttles electrons from NAD(P)H:plastoquinone, via FMN and iron-sulfur (Fe-S) centers, to quinones in the photosynthetic chain and possibly in a chloroplast respiratory chain. The immediate electron acceptor for the enzyme in this species is believed to be plastoquinone. Couples the redox reaction to proton translocation, and thus conserves the redox energy in a proton gradient. The protein is NAD(P)H-quinone oxidoreductase subunit 5, chloroplastic (ndhF) of Marchantia polymorpha (Common liverwort).